The sequence spans 837 residues: Toll-like receptor 4 (837 aa).

A signal peptide spans 1-23; the sequence is MMSASRLAGTLIPAMAFLSCVRP. Residues 24–629 are Extracellular-facing; the sequence is ESWEPCVVPN…SLNITCQMNK (606 aa). Cys-29 and Cys-38 are disulfide-bonded. The N-linked (GlcNAc...) asparagine glycan is linked to Asn-33. LRR repeat units lie at residues 53–74, 77–98, 101–122, 125–146, and 149–170; these read STKN…SFFS, ELQV…AYQS, HLST…AFSG, SLQK…PIGH, and TLKE…EYFS. Asn-171 carries an N-linked (GlcNAc...) asparagine glycan. 3 LRR repeats span residues 174–197, 203–223, and 225–245; these read NLEY…RVLH, NLSL…AFKE, and RLHK…KTCI. Asn-203 carries an N-linked (GlcNAc...) asparagine glycan. Cys-279 and Cys-304 are disulfide-bonded. Asn-280 and Asn-307 each carry an N-linked (GlcNAc...) asparagine glycan. LRR repeat units lie at residues 329–349, 350–371, 372–392, 398–420, 421–442, 446–454, 470–493, 495–516, 519–540, and 543–563; these read GWQH…LKLK, SLKR…VDLP, SLEF…CSQS, SLKY…LGLE, QLEH…SVFL, NLIYLDISH, SLEV…FTEL, NLTF…AFNS, SLQV…PYKC, and SLRV…QELQ. A disulfide bond links Cys-388 and Cys-389. Residues Asn-495 and Asn-524 are each glycosylated (N-linked (GlcNAc...) asparagine). A glycan (N-linked (GlcNAc...) asparagine) is linked at Asn-573. The LRRCT domain maps to 577–627; that stretch reads NDFACTCEHQSFLQWIKDQRQLLVEVERMECATPSDKQGMPVLSLNITCQM. 2 disulfides stabilise this stretch: Cys-581/Cys-607 and Cys-583/Cys-625. Residues Asn-622 and Asn-628 are each glycosylated (N-linked (GlcNAc...) asparagine). The helical transmembrane segment at 630 to 650 threads the bilayer; sequence TIIGVSVLSVLVVSVVAVLVY. Residues 651–837 lie on the Cytoplasmic side of the membrane; the sequence is KFYFHLMLLA…GCNWQEATSI (187 aa). Positions 670–813 constitute a TIR domain; the sequence is NVYDAFVIYS…IFWRRLRKAL (144 aa).

This sequence belongs to the Toll-like receptor family. In terms of assembly, belongs to the lipopolysaccharide (LPS) receptor, a multi-protein complex containing at least CD14, LY96 and TLR4. Binding to bacterial LPS leads to homodimerization. Interacts with LY96 via the extracellular domain. Interacts with MYD88 and TIRAP via their respective TIR domains. Interacts with TICAM2. Interacts with NOX4. Interacts with CNPY3 and HSP90B1; this interaction is required for proper folding in the endoplasmic reticulum. Interacts with MAP3K21; this interaction leads to negative regulation of TLR4 signaling. Interacts with CD36, following CD36 stimulation by oxLDL or amyloid-beta 42, and forms a heterodimer with TLR6. The trimeric complex is internalized and triggers inflammatory response. LYN kinase activity facilitates TLR4-TLR6 heterodimerization and signal initiation. Interacts with TICAM1 in response to LPS in a WDFY1-dependent manner. Interacts with WDFY1 in response to LPS. Interacts with SMPDL3B. Interacts with CEACAM1; upon lipopolysaccharide stimulation, forms a complex including TLR4 and the phosphorylated form of SYK and CEACAM1, which in turn, recruits PTPN6 that dephosphorylates SYK, reducing the production of reactive oxygen species (ROS) and lysosome disruption, which in turn, reduces the activity of the inflammasome. Interacts with RFTN1; the interaction occurs in response to lipopolysaccharide stimulation. Interacts with SCIMP; the interaction occurs in response to lipopolysaccharide stimulation and is enhanced by phosphorylation of SCIMP by LYN. This interaction facilitates the phosphorylation of TLR4 by LYN which elicits a selective cytokine response in macrophages. Interacts with TRAF3IP3. Interacts with TREM1; this interaction enhances TLR4-mediated inflammatory response. Interacts with ZG16B/PAUF. Interacts with CD82; this interaction inhibits TLR4-mediated signaling pathway. Post-translationally, phosphorylated on tyrosine residues by LYN after binding lipopolysaccharide. In terms of processing, ubiquitinated by RNF128 via 'Lys-28'-linked polyubiquitin chains, leading to proteasomal degradation.

The protein resides in the cell membrane. It localises to the early endosome. Its subcellular location is the cell projection. The protein localises to the ruffle. Transmembrane receptor that functions as a pattern recognition receptor recognizing pathogen- and damage-associated molecular patterns (PAMPs and DAMPs) to induce innate immune responses via downstream signaling pathways. At the plasma membrane, cooperates with LY96 to mediate the innate immune response to bacterial lipopolysaccharide (LPS). Also involved in LPS-independent inflammatory responses triggered by free fatty acids, such as palmitate, and Ni(2+). Mechanistically, acts via MYD88, TIRAP and TRAF6, leading to NF-kappa-B activation, cytokine secretion and the inflammatory response. Alternatively, CD14-mediated TLR4 internalization via endocytosis is associated with the initiation of a MYD88-independent signaling via the TICAM1-TBK1-IRF3 axis leading to type I interferon production. In addition to the secretion of proinflammatory cytokines, initiates the activation of NLRP3 inflammasome and formation of a positive feedback loop between autophagy and NF-kappa-B signaling cascade. In complex with TLR6, promotes inflammation in monocytes/macrophages by associating with TLR6 and the receptor CD86. Upon ligand binding, such as oxLDL or amyloid-beta 42, the TLR4:TLR6 complex is internalized and triggers inflammatory response, leading to NF-kappa-B-dependent production of CXCL1, CXCL2 and CCL9 cytokines, via MYD88 signaling pathway, and CCL5 cytokine, via TICAM1 signaling pathway. In myeloid dendritic cells, vesicular stomatitis virus glycoprotein G but not LPS promotes the activation of IRF7, leading to type I IFN production in a CD14-dependent manner. The chain is Toll-like receptor 4 (TLR4) from Gorilla gorilla gorilla (Western lowland gorilla).